The following is a 183-amino-acid chain: MASSMISSGTVATVSADRPAPAQARMVAPFNGLKSSSAFPVTRKSNDITSIASNGGRVQCMQVWPPLGLKKFETLSYLPPLSSESLAKEVDYLLRKNWVPCLEFELETGFVYRENHRSPGYYDGRYWTMWKLPMFGCTDSSQVLKELEEAKKAYPQSFIRIIGFDNVRQVQCISFIAYKPAGF.

Residues 1-59 (MASSMISSGTVATVSADRPAPAQARMVAPFNGLKSSSAFPVTRKSNDITSIASNGGRVQ) constitute a chloroplast transit peptide.

The protein belongs to the RuBisCO small chain family. As to quaternary structure, heterohexadecamer of 8 large and 8 small subunits.

It localises to the plastid. It is found in the chloroplast. Functionally, ruBisCO catalyzes two reactions: the carboxylation of D-ribulose 1,5-bisphosphate, the primary event in carbon dioxide fixation, as well as the oxidative fragmentation of the pentose substrate. Both reactions occur simultaneously and in competition at the same active site. Although the small subunit is not catalytic it is essential for maximal activity. In Pyrus pyrifolia (Chinese pear), this protein is Ribulose bisphosphate carboxylase small subunit, chloroplastic.